A 248-amino-acid polypeptide reads, in one-letter code: ATP synthase subunit a (248 aa).

Residues 1-3 constitute a propeptide, removed in mature form; sequence MLY. Helical transmembrane passes span 24 to 44, 86 to 106, 117 to 137, 146 to 166, 183 to 203, 205 to 225, and 227 to 247; these read MSLT…FFIF, IYMP…LVGL, FALP…IGFV, VLLP…VELL, ITSG…TSGI, LLFV…ELIV, and ILQA…SLIL.

This sequence belongs to the ATPase A chain family. In terms of assembly, F-type ATPases have 2 components, CF(1) - the catalytic core - and CF(0) - the membrane proton channel. CF(1) has five subunits: alpha(3), beta(3), gamma(1), delta(1), epsilon(1). CF(0) has three main subunits: a, b and c.

It localises to the mitochondrion inner membrane. Mitochondrial membrane ATP synthase (F(1)F(0) ATP synthase or Complex V) produces ATP from ADP in the presence of a proton gradient across the membrane which is generated by electron transport complexes of the respiratory chain. F-type ATPases consist of two structural domains, F(1) - containing the extramembraneous catalytic core and F(0) - containing the membrane proton channel, linked together by a central stalk and a peripheral stalk. During catalysis, ATP synthesis in the catalytic domain of F(1) is coupled via a rotary mechanism of the central stalk subunits to proton translocation. Key component of the proton channel; it may play a direct role in the translocation of protons across the membrane. The sequence is that of ATP synthase subunit a from Zancudomyces culisetae (Gut fungus).